Here is a 191-residue protein sequence, read N- to C-terminus: dTTP/UTP pyrophosphatase (191 aa).

Asp-70 functions as the Proton acceptor in the catalytic mechanism.

It belongs to the Maf family. YhdE subfamily. It depends on a divalent metal cation as a cofactor.

Its subcellular location is the cytoplasm. The catalysed reaction is dTTP + H2O = dTMP + diphosphate + H(+). It carries out the reaction UTP + H2O = UMP + diphosphate + H(+). Functionally, nucleoside triphosphate pyrophosphatase that hydrolyzes dTTP and UTP. May have a dual role in cell division arrest and in preventing the incorporation of modified nucleotides into cellular nucleic acids. The sequence is that of dTTP/UTP pyrophosphatase from Clostridium novyi (strain NT).